We begin with the raw amino-acid sequence, 374 residues long: UDP-N-acetylglucosamine--N-acetylmuramyl-(pentapeptide) pyrophosphoryl-undecaprenol N-acetylglucosamine transferase (374 aa).

Residues 13–15, Asn-124, Arg-165, Ser-193, and Gln-294 each bind UDP-N-acetyl-alpha-D-glucosamine; that span reads TGG.

This sequence belongs to the glycosyltransferase 28 family. MurG subfamily.

The protein localises to the cell inner membrane. It catalyses the reaction di-trans,octa-cis-undecaprenyl diphospho-N-acetyl-alpha-D-muramoyl-L-alanyl-D-glutamyl-meso-2,6-diaminopimeloyl-D-alanyl-D-alanine + UDP-N-acetyl-alpha-D-glucosamine = di-trans,octa-cis-undecaprenyl diphospho-[N-acetyl-alpha-D-glucosaminyl-(1-&gt;4)]-N-acetyl-alpha-D-muramoyl-L-alanyl-D-glutamyl-meso-2,6-diaminopimeloyl-D-alanyl-D-alanine + UDP + H(+). Its pathway is cell wall biogenesis; peptidoglycan biosynthesis. In terms of biological role, cell wall formation. Catalyzes the transfer of a GlcNAc subunit on undecaprenyl-pyrophosphoryl-MurNAc-pentapeptide (lipid intermediate I) to form undecaprenyl-pyrophosphoryl-MurNAc-(pentapeptide)GlcNAc (lipid intermediate II). The chain is UDP-N-acetylglucosamine--N-acetylmuramyl-(pentapeptide) pyrophosphoryl-undecaprenol N-acetylglucosamine transferase from Rhizobium etli (strain CIAT 652).